Reading from the N-terminus, the 75-residue chain is Transcription attenuation protein MtrB (75 aa).

Belongs to the MtrB family. As to quaternary structure, oligomer of 11 identical subunits arranged in doughnut-like structure.

Its function is as follows. Required for transcription attenuation control in the trp operon. This trans-acting factor binds to trinucleotide repeats (GAG or UAG) located in the trp leader transcript causing transcription termination. Binds the leader RNA only in presence of L-tryptophan. This is Transcription attenuation protein MtrB (mtrB) from Bacillus subtilis (strain 168).